The primary structure comprises 353 residues: MACCIPDELKEQKRINQEIERQLKRDKRDARRELKLLLLGTGESGKSTFIKQMRIIHGAGYSDEDKRSHIKIVYQNIFMAMHAMIRAMDTLNIQYINPANRENGNMIRQIDYETVTTFDKPCVDAIISLWNDDGIQECYDRRREYQLTDSAKYYLDSVERISQQDYLPTLQDILRVRVPTTGIIEYPFDLDSIIFRMVDVGGQRSERRKWIHCFENVTSIMFLVALSEYDQVLVESDNENRMEESKALFRTIITYPWFQNSSVILFLNKKDLLEEKIMHSHLVDYFPEFDGPKKEASTAREFILKMFVELNPDPDKIIYSHFTCATDTENIRFVFAAVKDTILQLNLKEYNLV.

Residues C3 and C4 are each lipidated (S-palmitoyl cysteine). In terms of domain architecture, G-alpha spans 32–353; that stretch reads RELKLLLLGT…QLNLKEYNLV (322 aa). Positions 35-48 are G1 motif; sequence KLLLLGTGESGKST. GTP-binding positions include 40–47, 174–180, 199–203, 268–271, and A325; these read GTGESGKS, LRVRVPT, DVGGQ, and NKKD. The Mg(2+) site is built by S47 and T180. The interval 172–180 is G2 motif; sequence DILRVRVPT. The G3 motif stretch occupies residues 195 to 204; the sequence is FRMVDVGGQR. The interval 264-271 is G4 motif; it reads ILFLNKKD. The tract at residues 323–328 is G5 motif; the sequence is TCATDT.

Belongs to the G-alpha family. G(q) subfamily. As to quaternary structure, g proteins are composed of 3 units; alpha, beta and gamma. The alpha chain contains the guanine nucleotide binding site.

Functionally, guanine nucleotide-binding proteins (G proteins) are involved as modulators or transducers in various transmembrane signaling systems. This Lymnaea stagnalis (Great pond snail) protein is Guanine nucleotide-binding protein G(q) subunit alpha.